The chain runs to 467 residues: 3-isopropylmalate dehydratase large subunit (467 aa).

[4Fe-4S] cluster contacts are provided by cysteine 347, cysteine 407, and cysteine 410.

This sequence belongs to the aconitase/IPM isomerase family. LeuC type 1 subfamily. In terms of assembly, heterodimer of LeuC and LeuD. The cofactor is [4Fe-4S] cluster.

The catalysed reaction is (2R,3S)-3-isopropylmalate = (2S)-2-isopropylmalate. Its pathway is amino-acid biosynthesis; L-leucine biosynthesis; L-leucine from 3-methyl-2-oxobutanoate: step 2/4. In terms of biological role, catalyzes the isomerization between 2-isopropylmalate and 3-isopropylmalate, via the formation of 2-isopropylmaleate. The chain is 3-isopropylmalate dehydratase large subunit from Synechococcus sp. (strain JA-3-3Ab) (Cyanobacteria bacterium Yellowstone A-Prime).